The chain runs to 350 residues: ATPase GET3 (350 aa).

Residue 26-33 participates in ATP binding; it reads KGGVGKTT. The active site involves D57. 2 residues coordinate ATP: E241 and N268. Zn(2+) is bound by residues C281 and C284.

The protein belongs to the arsA ATPase family. Homodimer. Component of the Golgi to ER traffic (GET) complex, which is composed of GET1, GET2 and GET3. Within the complex, GET1 and GET2 form a heterotetramer which is stabilized by phosphatidylinositol binding and which binds to the GET3 homodimer. Interacts with the chloride channel protein GEF1.

Its subcellular location is the cytoplasm. It localises to the endoplasmic reticulum. The protein resides in the golgi apparatus. In terms of biological role, ATPase required for the post-translational delivery of tail-anchored (TA) proteins to the endoplasmic reticulum. Recognizes and selectively binds the transmembrane domain of TA proteins in the cytosol. This complex then targets to the endoplasmic reticulum by membrane-bound receptors GET1 and GET2, where the tail-anchored protein is released for insertion. This process is regulated by ATP binding and hydrolysis. ATP binding drives the homodimer towards the closed dimer state, facilitating recognition of newly synthesized TA membrane proteins. ATP hydrolysis is required for insertion. Subsequently, the homodimer reverts towards the open dimer state, lowering its affinity for the GET1-GET2 receptor, and returning it to the cytosol to initiate a new round of targeting. Cooperates with the HDEL receptor ERD2 to mediate the ATP-dependent retrieval of resident ER proteins that contain a C-terminal H-D-E-L retention signal from the Golgi to the ER. Involved in low-level resistance to the oxyanions arsenite and arsenate, and in heat tolerance. The protein is ATPase GET3 of Candida glabrata (strain ATCC 2001 / BCRC 20586 / JCM 3761 / NBRC 0622 / NRRL Y-65 / CBS 138) (Yeast).